Reading from the N-terminus, the 317-residue chain is Zinc finger protein 771 (317 aa).

Residues 1 to 17 (MPGEQQAEEEEEEEMQE) show a composition bias toward acidic residues. Residues 1-63 (MPGEQQAEEE…APSADPARPH (63 aa)) are disordered. Lysine 33 participates in a covalent cross-link: Glycyl lysine isopeptide (Lys-Gly) (interchain with G-Cter in SUMO2). Over residues 33–49 (KYEVVKLKIPMDNKEVP) the composition is skewed to basic and acidic residues. 8 C2H2-type zinc fingers span residues 63–85 (HACPDCGRAFARRSTLAKHARTH), 91–113 (FGCTECGRRFSQKSALTKHGRTH), 119–141 (YECPECDKRFSAASNLRQHRRRH), 147–169 (YACAHCGRRFAQSSNYAQHLRVH), 175–197 (YACPDCGRAFGGSSCLARHRRTH), 203–225 (YACADCGTRFAQSSALAKHRRVH), 231–253 (HRCAVCGRRFGHRSNLAEHARTH), and 259–281 (YPCAECGRRFRLSSHFIRHRRAH).

This sequence belongs to the krueppel C2H2-type zinc-finger protein family.

It localises to the nucleus. Functionally, may be involved in transcriptional regulation. This Homo sapiens (Human) protein is Zinc finger protein 771 (ZNF771).